The sequence spans 494 residues: Probable cytochrome P450 313a4 (494 aa).

C440 is a binding site for heme.

The protein belongs to the cytochrome P450 family. Requires heme as cofactor.

Its subcellular location is the endoplasmic reticulum membrane. It localises to the microsome membrane. May be involved in the metabolism of insect hormones and in the breakdown of synthetic insecticides. The protein is Probable cytochrome P450 313a4 (Cyp313a4) of Drosophila melanogaster (Fruit fly).